A 614-amino-acid polypeptide reads, in one-letter code: Threonine--tRNA ligase (614 aa).

Residues 1–138 (MRTLMIHSDY…HPLSELSRTI (138 aa)) form an editing domain region. The segment at 133-157 (ELSRTITTEPEEESEDSEEEPSEPS) is disordered. Positions 141-154 (EPEEESEDSEEEPS) are enriched in acidic residues. The interval 200-495 (PHVRLMREKE…TDKGNKPSLP (296 aa)) is catalytic. 3 residues coordinate Zn(2+): C292, H344, and H466.

It belongs to the class-II aminoacyl-tRNA synthetase family. Homodimer. The cofactor is Zn(2+).

It localises to the cytoplasm. The catalysed reaction is tRNA(Thr) + L-threonine + ATP = L-threonyl-tRNA(Thr) + AMP + diphosphate + H(+). In terms of biological role, catalyzes the attachment of threonine to tRNA(Thr) in a two-step reaction: L-threonine is first activated by ATP to form Thr-AMP and then transferred to the acceptor end of tRNA(Thr). Also edits incorrectly charged L-seryl-tRNA(Thr). This chain is Threonine--tRNA ligase, found in Methanosphaera stadtmanae (strain ATCC 43021 / DSM 3091 / JCM 11832 / MCB-3).